Consider the following 333-residue polypeptide: Anthranilate phosphoribosyltransferase (333 aa).

Residues G81, 84-85 (GD), T89, 91-94 (NIST), 109-117 (KHGNRSVSS), and S121 contribute to the 5-phospho-alpha-D-ribose 1-diphosphate site. G81 is an anthranilate binding site. S93 is a Mg(2+) binding site. Anthranilate is bound at residue N112. An anthranilate-binding site is contributed by R167. Residues D225 and E226 each coordinate Mg(2+).

It belongs to the anthranilate phosphoribosyltransferase family. As to quaternary structure, homodimer. Mg(2+) is required as a cofactor.

The catalysed reaction is N-(5-phospho-beta-D-ribosyl)anthranilate + diphosphate = 5-phospho-alpha-D-ribose 1-diphosphate + anthranilate. It participates in amino-acid biosynthesis; L-tryptophan biosynthesis; L-tryptophan from chorismate: step 2/5. Catalyzes the transfer of the phosphoribosyl group of 5-phosphorylribose-1-pyrophosphate (PRPP) to anthranilate to yield N-(5'-phosphoribosyl)-anthranilate (PRA). This Glaesserella parasuis serovar 5 (strain SH0165) (Haemophilus parasuis) protein is Anthranilate phosphoribosyltransferase.